A 412-amino-acid chain; its full sequence is Argininosuccinate synthase (412 aa).

ATP is bound by residues 10–18 (AYSGGLDTS) and Ala-36. L-citrulline-binding residues include Tyr-87 and Ser-92. Phosphotyrosine is present on Tyr-87. Lys-112 is subject to N6-acetyllysine. Position 113 is a phosphotyrosine (Tyr-113). 115-123 (SHGATGKGN) contributes to the ATP binding site. L-aspartate-binding residues include Thr-119, Asn-123, and Asp-124. An L-citrulline-binding site is contributed by Asn-123. Arg-127 provides a ligand contact to L-citrulline. N6-acetyllysine; by CLOCK is present on residues Lys-165 and Lys-176. Positions 180 and 189 each coordinate L-citrulline. Ser-180 carries the phosphoserine modification. Residue Thr-219 is modified to Phosphothreonine. L-citrulline-binding residues include Glu-270 and Tyr-282.

The protein belongs to the argininosuccinate synthase family. Type 1 subfamily. In terms of assembly, homotetramer. Interacts with NMRAL1. Interacts with CLOCK; in a circadian manner. Forms tissue-specific complexes with ASL, SLC7A1, HSP90AA1 and nitric oxide synthase NOS1, NOS2 or NOS3; the complex regulates cell-autonomous L-arginine synthesis and citrulline recycling while channeling extracellular L-arginine to nitric oxide synthesis pathway. Post-translationally, acetylated by CLOCK in a circadian manner which negatively regulates its enzyme activity. Deacetylated by histone deacetylases. In terms of tissue distribution, expressed in adult liver.

The protein localises to the cytoplasm. It is found in the cytosol. It carries out the reaction L-citrulline + L-aspartate + ATP = 2-(N(omega)-L-arginino)succinate + AMP + diphosphate + H(+). It functions in the pathway amino-acid biosynthesis; L-arginine biosynthesis; L-arginine from L-ornithine and carbamoyl phosphate: step 2/3. Its pathway is nitrogen metabolism; urea cycle; (N(omega)-L-arginino)succinate from L-aspartate and L-citrulline: step 1/1. Its function is as follows. One of the enzymes of the urea cycle, the metabolic pathway transforming neurotoxic amonia produced by protein catabolism into inocuous urea in the liver of ureotelic animals. Catalyzes the formation of arginosuccinate from aspartate, citrulline and ATP and together with ASL it is responsible for the biosynthesis of arginine in most body tissues. The chain is Argininosuccinate synthase from Homo sapiens (Human).